A 247-amino-acid chain; its full sequence is Protein Thf1 (247 aa).

Residues 198–224 (IAQVRQAMDDILEAQKKRREADQAKKE) adopt a coiled-coil conformation. A disordered region spans residues 209-247 (LEAQKKRREADQAKKEGSDDTPTTEASTPDSEPTSEVSS). Positions 210–226 (EAQKKRREADQAKKEGS) are enriched in basic and acidic residues. The span at 228-247 (DTPTTEASTPDSEPTSEVSS) shows a compositional bias: polar residues.

Belongs to the THF1 family.

In terms of biological role, may be involved in photosynthetic membrane biogenesis. This Acaryochloris marina (strain MBIC 11017) protein is Protein Thf1.